The following is a 920-amino-acid chain: Alpha-L-rhamnosidase (920 aa).

Residues 1–19 form the signal peptide; it reads MCVVRTFWFAVLTVIFAVS. Cys20 is lipidated: N-palmitoyl cysteine. Residue Cys20 is the site of S-diacylglycerol cysteine attachment. Alpha-L-rhamnose-binding positions include Asp500, 504–506, Asp513, and Trp565; that span reads RDE. The Proton donor role is filled by Glu506. The Proton acceptor role is filled by Glu779. His800 is an alpha-L-rhamnose binding site.

Belongs to the glycosyl hydrolase 78 family.

The protein resides in the cell membrane. The catalysed reaction is Hydrolysis of terminal non-reducing alpha-L-rhamnose residues in alpha-L-rhamnosides.. Functionally, alpha-L-rhamnosidase involved in ulvan degradation. Ulvan is the main polysaccharide component of the Ulvales (green seaweed) cell wall. It is composed of disaccharide building blocks comprising 3-sulfated rhamnose (Rha3S) linked to D-glucuronic acid (GlcA), L-iduronic acid (IduA), or D-xylose (Xyl). The enzyme is able to degrade p-nitrophenyl-alpha-L-rhamnopyranoside (PNP-Rha) in vitro. Incubating the enzyme with the products obtained after degradation with ulvan lyase and beta-glucuronyl hydrolase (i.e. the trisaccharides beta-alpha-L-Rha3S-IduA-Rha3S and beta-alpha-L-Rha3S-GlcA-Rha3S) showed no degradation, suggesting that the enzyme is active on neutral rhamnose and that desulfation of the oligosaccharide must be achieved before cleavage of rhamnose. This is Alpha-L-rhamnosidase from Alteromonas sp. (strain LOR).